The sequence spans 184 residues: Type-1 fimbrial protein, A chain (184 aa).

A signal peptide spans 1 to 22 (MKHKLMTSTIASLMFVAGAAVA). Residues C46 and C86 are joined by a disulfide bond.

Belongs to the fimbrial protein family.

It localises to the fimbrium. Functionally, fimbriae (also called pili), polar filaments radiating from the surface of the bacterium to a length of 0.5-1.5 micrometers and numbering 100-300 per cell, enable bacteria to colonize the epithelium of specific host organs. The protein is Type-1 fimbrial protein, A chain (fimA) of Salmonella typhi.